The sequence spans 470 residues: Cysteine--tRNA ligase (470 aa).

Cys-28 contributes to the Zn(2+) binding site. Positions Pro-30–Asn-40 match the 'HIGH' region motif. Zn(2+)-binding residues include Cys-212, His-237, and Glu-241. Positions Lys-271 to Ser-275 match the 'KMSKS' region motif. Lys-274 serves as a coordination point for ATP.

Belongs to the class-I aminoacyl-tRNA synthetase family. In terms of assembly, monomer. The cofactor is Zn(2+).

It localises to the cytoplasm. It catalyses the reaction tRNA(Cys) + L-cysteine + ATP = L-cysteinyl-tRNA(Cys) + AMP + diphosphate. The protein is Cysteine--tRNA ligase of Pediococcus pentosaceus (strain ATCC 25745 / CCUG 21536 / LMG 10740 / 183-1w).